Here is a 489-residue protein sequence, read N- to C-terminus: Rhamnulokinase (489 aa).

13–17 is an ATP binding site; that stretch reads ASSGR. Cys68 and Cys222 are disulfide-bonded. Residues Gly83 and 236–238 each bind substrate; that span reads HDT. The active-site Proton acceptor is the Asp237. Thr259 contacts ATP. Asn296 serves as a coordination point for substrate. Position 304 (Gln304) interacts with ATP. A disulfide bond links Cys353 and Cys370. Residue Gly402 participates in ATP binding. Cys413 and Cys417 are disulfide-bonded.

Belongs to the rhamnulokinase family. Requires Mg(2+) as cofactor.

The enzyme catalyses L-rhamnulose + ATP = L-rhamnulose 1-phosphate + ADP + H(+). It functions in the pathway carbohydrate degradation; L-rhamnose degradation; glycerone phosphate from L-rhamnose: step 2/3. Involved in the catabolism of L-rhamnose (6-deoxy-L-mannose). Catalyzes the transfer of the gamma-phosphate group from ATP to the 1-hydroxyl group of L-rhamnulose to yield L-rhamnulose 1-phosphate. In Shigella sonnei (strain Ss046), this protein is Rhamnulokinase.